Consider the following 427-residue polypeptide: Serine--tRNA ligase (427 aa).

231–233 serves as a coordination point for L-serine; the sequence is TAE. 262 to 264 contributes to the ATP binding site; it reads RSE. Residue glutamate 285 coordinates L-serine. 349 to 352 is an ATP binding site; it reads EISS. Serine 385 is an L-serine binding site.

It belongs to the class-II aminoacyl-tRNA synthetase family. Type-1 seryl-tRNA synthetase subfamily. In terms of assembly, homodimer. The tRNA molecule binds across the dimer.

It is found in the cytoplasm. It catalyses the reaction tRNA(Ser) + L-serine + ATP = L-seryl-tRNA(Ser) + AMP + diphosphate + H(+). It carries out the reaction tRNA(Sec) + L-serine + ATP = L-seryl-tRNA(Sec) + AMP + diphosphate + H(+). Its pathway is aminoacyl-tRNA biosynthesis; selenocysteinyl-tRNA(Sec) biosynthesis; L-seryl-tRNA(Sec) from L-serine and tRNA(Sec): step 1/1. Its function is as follows. Catalyzes the attachment of serine to tRNA(Ser). Is also able to aminoacylate tRNA(Sec) with serine, to form the misacylated tRNA L-seryl-tRNA(Sec), which will be further converted into selenocysteinyl-tRNA(Sec). In Listeria welshimeri serovar 6b (strain ATCC 35897 / DSM 20650 / CCUG 15529 / CIP 8149 / NCTC 11857 / SLCC 5334 / V8), this protein is Serine--tRNA ligase.